A 317-amino-acid polypeptide reads, in one-letter code: Taste receptor type 2 member 14 (317 aa).

The Extracellular segment spans residues 1 to 7 (MGGVIKS). A helical transmembrane segment spans residues 8 to 28 (IFTFVLIVEFIIGNLGNSFIA). Over 29-55 (LVNCIDWVKGRKISSVDRILTALAISR) the chain is Cytoplasmic. Residues 56–76 (ISLVWLIFGSWCVSVFFPALF) traverse the membrane as a helical segment. At 77 to 87 (ATEKMFRMLTN) the chain is on the extracellular side. Cholesterol is bound by residues Thr86 and Trp89. Residues 88–108 (IWTVINHFSVWLATGLGTFYF) traverse the membrane as a helical segment. Over 109–129 (LKIANFSNSIFLYLKWRVKKV) the chain is Cytoplasmic. The chain crosses the membrane as a helical span at residues 130–150 (VLVLLLVTSVFLFLNIALINI). Residues 151–184 (HINASINGYRRNKTCSSDSSNFTRFSSLIVLTST) lie on the Extracellular side of the membrane. Asn153, Asn162, and Asn171 each carry an N-linked (GlcNAc...) asparagine glycan. Position 180 (Val180) interacts with cholesterol. Residues 185 to 205 (VFIFIPFTLSLAMFLLLIFSM) traverse the membrane as a helical segment. The Cytoplasmic portion of the chain corresponds to 206-232 (WKHRKKMQHTVKISGDASTKAHRGVKS). Residues 233–253 (VITFFLLYAIFSLSFFISVWT) traverse the membrane as a helical segment. Over 254–261 (SERLEENL) the chain is Extracellular. Residues 262 to 282 (IILSQVMGMAYPSCHSCVLIL) traverse the membrane as a helical segment. Residues Ser265 and Met268 each contribute to the cholesterol site. The Cytoplasmic segment spans residues 283–317 (GNKKLRQASLSVLLWLRYMFKDGEPSGHKEFRESS).

Belongs to the G-protein coupled receptor T2R family. In terms of assembly, core component of the TAS2R14-GNAI1 complex, consisting of TAS2R14, GNAI1, GNB1 and GNG2; within the complex interacts with GNAI1. Core component of the TAS2R14-GNAT3 complex, consisting of TAS2R14, GNAT3, GNB1 and GNG2; within the complex interacts with GNAT3. Core component of the TAS2R14-GNAS2 complex, consisting of TAS2R14, GNAS2, GNB1 and GNG2; within the complex interacts with GNAS2. Highly expressed in cerebellum, pancreas, small intestine and thymus; also expressed in adipose, aorta, skin and tongue, but at significantly lower levels. Expressed in subsets of taste receptor cells of the tongue and palate epithelium and exclusively in gustducin-positive cells. Expressed in testis.

The protein resides in the membrane. The enzyme catalyses Ca(2+)(in) = Ca(2+)(out). The catalysed reaction is 3',5'-cyclic AMP(in) = 3',5'-cyclic AMP(out). With respect to regulation, basal activity is enhanced by binding to bitter tastants, such as flufenamic acid and aristolochic acid. Regulated by cholesterol in a concentration-dependent manner. Functionally, gustducin-linked G-protein coupled receptor that plays a role in the perception of bitterness. The activity of this receptor stimulates GNAT3, activating the gustducin G-protein pathway. Likely plays a role in sensing the chemical composition of the gastrointestinal content and other extra-oral tissues via the inhibitory G-protein pathways. This is Taste receptor type 2 member 14 (TAS2R14) from Homo sapiens (Human).